The primary structure comprises 1432 residues: ABC transporter B family member 3 (1432 aa).

Disordered stretches follow at residues 1–21 (MDDG…EEEI) and 48–149 (ITQP…KTEE). Composition is skewed to low complexity over residues 52–62 (SNNNNNSNNNN), 76–106 (NNNN…FNNN), and 118–135 (NTNE…NNND). The stretch at 117 to 163 (ENTNENNNKNNNNNNNNNDDYNDGADERVKTEEEIKKEAENELNQSV) forms a coiled coil. The ABC transmembrane type-1 1 domain occupies 180 to 479 (MFLGTIAAVI…ASPCLALFAQ (300 aa)). The next 6 helical transmembrane spans lie at 185–205 (IAAV…GLVV), 232–252 (LLML…LWMI), 303–323 (KVGR…IGFT), 325–345 (GWQL…GGFF), 410–430 (GLGL…AFWY), and 457–477 (FFAV…LALF). An ABC transporter 1 domain is found at 514-750 (IEFKDVGFHY…QGLYFDLVEK (237 aa)). 549-556 (GDSGGGKS) contacts ATP. Residues 787–819 (KRSLRKNESESNKKDKEDSNNKKKKKSNKKKVE) are disordered. Residues 791–807 (RKNESESNKKDKEDSNN) show a composition bias toward basic and acidic residues. The region spanning 837 to 1157 (WCFGFLSAVG…ASSFAPDLAK (321 aa)) is the ABC transmembrane type-1 2 domain. 6 helical membrane-spanning segments follow: residues 838-858 (CFGF…AMVF), 882-902 (LMFV…GFLF), 968-988 (MVGG…VIIA), 989-1009 (CFPL…GFSS), 1060-1080 (ISGF…CLSF), and 1134-1154 (VFFA…FAPD). The ABC transporter 2 domain occupies 1192–1428 (IEFKNLHFSY…EGPYSQLWYN (237 aa)). Residue 1227-1234 (GDSGGGKS) coordinates ATP.

This sequence belongs to the ABC transporter superfamily. ABCB family. Multidrug resistance exporter (TC 3.A.1.201) subfamily.

The protein resides in the membrane. This Dictyostelium discoideum (Social amoeba) protein is ABC transporter B family member 3 (abcB3).